A 444-amino-acid polypeptide reads, in one-letter code: Phosphoglucosamine mutase (444 aa).

S102 serves as the catalytic Phosphoserine intermediate. The Mg(2+) site is built by S102, D241, D243, and D245. Position 102 is a phosphoserine (S102).

Belongs to the phosphohexose mutase family. Mg(2+) serves as cofactor. Post-translationally, activated by phosphorylation.

It catalyses the reaction alpha-D-glucosamine 1-phosphate = D-glucosamine 6-phosphate. In terms of biological role, catalyzes the conversion of glucosamine-6-phosphate to glucosamine-1-phosphate. This chain is Phosphoglucosamine mutase, found in Paracidovorax citrulli (strain AAC00-1) (Acidovorax citrulli).